The chain runs to 248 residues: Probable transcriptional regulatory protein PHZ_c3068 (248 aa).

This sequence belongs to the TACO1 family.

It localises to the cytoplasm. The chain is Probable transcriptional regulatory protein PHZ_c3068 from Phenylobacterium zucineum (strain HLK1).